Reading from the N-terminus, the 1076-residue chain is Guanylyl cyclase C (1076 aa).

The N-terminal stretch at 1–23 (MKSPLLGLVVWSLLLQLLQPGLA) is a signal peptide. Topologically, residues 24 to 433 (FWNSQISQNC…PHDIPGLGPH (410 aa)) are extracellular. Asn35, Asn82, Asn191, Asn198, Asn287, Asn306, Asn310, Asn348, and Asn405 each carry an N-linked (GlcNAc...) asparagine glycan. The chain crosses the membrane as a helical span at residues 434–457 (ILLIAVCTLAGVVVLILLIALLVL). The Cytoplasmic portion of the chain corresponds to 458-1076 (RKYKKDNELR…NTTDQDSTYF (619 aa)). The region spanning 492-752 (LKIDDDKKRD…KIENTLAKIF (261 aa)) is the Protein kinase domain. The Guanylate cyclase domain maps to 827–957 (TVYFSDIVGF…DTVNTASRME (131 aa)).

The protein belongs to the adenylyl cyclase class-4/guanylyl cyclase family. Homotrimer. Interacts via its C-terminal region with NHERF4. Interacts with the lectin chaperone VIP36. In terms of processing, glycosylation at Asn-62 is required for interaction with VIP36 while glycosylation at Asn-348 and Asn-405 modulates ligand-mediated GC-C activation.

It localises to the cell membrane. The protein localises to the endoplasmic reticulum membrane. It catalyses the reaction GTP = 3',5'-cyclic GMP + diphosphate. In terms of biological role, guanylyl cyclase that catalyzes synthesis of cyclic GMP (cGMP) from GTP. In Cavia porcellus (Guinea pig), this protein is Guanylyl cyclase C (GUCY2C).